Here is a 463-residue protein sequence, read N- to C-terminus: Hydroxyacid-oxoacid transhydrogenase, mitochondrial (463 aa).

It belongs to the iron-containing alcohol dehydrogenase family. Hydroxyacid-oxoacid transhydrogenase subfamily.

It localises to the mitochondrion. The catalysed reaction is (S)-3-hydroxybutanoate + 2-oxoglutarate = (R)-2-hydroxyglutarate + acetoacetate. It carries out the reaction 4-hydroxybutanoate + 2-oxoglutarate = (R)-2-hydroxyglutarate + succinate semialdehyde. Catalyzes the cofactor-independent reversible oxidation of gamma-hydroxybutyrate (GHB) to succinic semialdehyde (SSA) coupled to reduction of 2-ketoglutarate (2-KG) to D-2-hydroxyglutarate (D-2-HG). L-3-hydroxybutyrate (L-3-OHB) is also a substrate for HOT when using 2-KG as hydrogen acceptor, resulting in the formation of D-2-HG. The chain is Hydroxyacid-oxoacid transhydrogenase, mitochondrial (adhfe1) from Xenopus tropicalis (Western clawed frog).